The following is a 132-amino-acid chain: Small ribosomal subunit protein uS8 (132 aa).

The protein belongs to the universal ribosomal protein uS8 family. In terms of assembly, part of the 30S ribosomal subunit. Contacts proteins S5 and S12.

In terms of biological role, one of the primary rRNA binding proteins, it binds directly to 16S rRNA central domain where it helps coordinate assembly of the platform of the 30S subunit. In Mycobacterium avium (strain 104), this protein is Small ribosomal subunit protein uS8.